A 400-amino-acid polypeptide reads, in one-letter code: Argininosuccinate synthase (400 aa).

Residue 8–16 (AYSGGLDTS) participates in ATP binding. Tyr87 contributes to the L-citrulline binding site. Gly117 serves as a coordination point for ATP. Residues Thr119, Asn123, and Asp124 each coordinate L-aspartate. Asn123 is a binding site for L-citrulline. The L-citrulline site is built by Arg127, Ser175, Glu260, and Tyr272.

It belongs to the argininosuccinate synthase family. Type 1 subfamily. Homotetramer.

Its subcellular location is the cytoplasm. It catalyses the reaction L-citrulline + L-aspartate + ATP = 2-(N(omega)-L-arginino)succinate + AMP + diphosphate + H(+). Its pathway is amino-acid biosynthesis; L-arginine biosynthesis; L-arginine from L-ornithine and carbamoyl phosphate: step 2/3. The protein is Argininosuccinate synthase of Mycolicibacterium gilvum (strain PYR-GCK) (Mycobacterium gilvum (strain PYR-GCK)).